The sequence spans 714 residues: FERM domain-containing protein 7 (714 aa).

Residues 2 to 282 (LHLKVQFLDD…EYHAFFRLSE (281 aa)) form the FERM domain. Residues 537-558 (NIRMKSFQQDLQVLQEAIARTS) adopt a coiled-coil conformation.

Expressed in liver, kidney, pancreas and at low levels in brain and heart. Expressed in embryonic brain and developing neural retina.

It is found in the cell projection. The protein localises to the neuron projection. The protein resides in the growth cone. In terms of biological role, plays a role in neurite development, may be through the activation of the GTPase RAC1. Plays a role in the control of eye movement and gaze stability. The chain is FERM domain-containing protein 7 (FRMD7) from Homo sapiens (Human).